We begin with the raw amino-acid sequence, 433 residues long: Metacaspase-1 (433 aa).

The interval 1 to 123 (MYPGRAKPTY…PPSQVQHTGP (123 aa)) is disordered. Positions 9 to 44 (TYNNQQAQQAQSQVGYQTGYSNAQPQQQYYTAPQQQ) are enriched in low complexity. 2 stretches are compositionally biased toward polar residues: residues 45-55 (NVSGSSMSFQH) and 83-109 (QQNYRNDIQQNHASGTVNGPSGYQQPQ). Active-site residues include histidine 222 and cysteine 278.

This sequence belongs to the peptidase C14B family.

Functionally, involved in cell death (apoptosis). The sequence is that of Metacaspase-1 (MCA1) from Kluyveromyces lactis (strain ATCC 8585 / CBS 2359 / DSM 70799 / NBRC 1267 / NRRL Y-1140 / WM37) (Yeast).